We begin with the raw amino-acid sequence, 168 residues long: Phosphopantetheine adenylyltransferase (168 aa).

Threonine 9 serves as a coordination point for substrate. ATP-binding positions include 9–10 and histidine 17; that span reads TF. Substrate is bound by residues lysine 41, leucine 73, and arginine 87. Residues 88–90, glutamate 98, and 123–129 each bind ATP; these read GLR and YQFISGT.

It belongs to the bacterial CoaD family. In terms of assembly, homohexamer. It depends on Mg(2+) as a cofactor.

It localises to the cytoplasm. The enzyme catalyses (R)-4'-phosphopantetheine + ATP + H(+) = 3'-dephospho-CoA + diphosphate. The protein operates within cofactor biosynthesis; coenzyme A biosynthesis; CoA from (R)-pantothenate: step 4/5. In terms of biological role, reversibly transfers an adenylyl group from ATP to 4'-phosphopantetheine, yielding dephospho-CoA (dPCoA) and pyrophosphate. This chain is Phosphopantetheine adenylyltransferase, found in Paraburkholderia phymatum (strain DSM 17167 / CIP 108236 / LMG 21445 / STM815) (Burkholderia phymatum).